We begin with the raw amino-acid sequence, 803 residues long: Volume-regulated anion channel subunit LRRC8B (803 aa).

The Cytoplasmic segment spans residues M1–D25. A helical transmembrane segment spans residues V26–Q46. Residues L47 to K119 lie on the Extracellular side of the membrane. 2 cysteine pairs are disulfide-bonded: C55-C304 and C109-C289. An N-linked (GlcNAc...) asparagine glycan is attached at N78. The helical transmembrane segment at F120–L140 threads the bilayer. At H141–Q261 the chain is on the cytoplasmic side. Residues S186 and S196 each carry the phosphoserine modification. A helical membrane pass occupies residues I262–Y282. Residues I283–S307 lie on the Extracellular side of the membrane. Residues L308–L328 form a helical membrane-spanning segment. Residues T329 to C803 are Cytoplasmic-facing. 15 LRR repeats span residues V415–L439, T440–L462, N464–E486, N488–L509, N511–E532, N539–L559, S562–K582, N586–L607, N609–Q630, S634–L655, N657–C678, K680–L701, N703–C724, K726–L747, and N749–Q771.

It belongs to the LRRC8 family. Heterohexamer; oligomerizes with other LRRC8 proteins (LRRC8A, LRRC8C, LRRC8D and/or LRRC8E) to form a heterohexamer. In vivo, the subunit composition may depend primarily on expression levels, and heterooligomeric channels containing various proportions of the different LRRC8 proteins may coexist.

It localises to the cell membrane. Its subcellular location is the endoplasmic reticulum membrane. The enzyme catalyses chloride(in) = chloride(out). The catalysed reaction is iodide(out) = iodide(in). It carries out the reaction taurine(out) = taurine(in). Functionally, non-essential component of the volume-regulated anion channel (VRAC, also named VSOAC channel), an anion channel required to maintain a constant cell volume in response to extracellular or intracellular osmotic changes. The VRAC channel conducts iodide better than chloride and can also conduct organic osmolytes like taurine. Channel activity requires LRRC8A plus at least one other family member (LRRC8B, LRRC8C, LRRC8D or LRRC8E); channel characteristics depend on the precise subunit composition. The chain is Volume-regulated anion channel subunit LRRC8B from Mus musculus (Mouse).